We begin with the raw amino-acid sequence, 252 residues long: Ubiquinone biosynthesis protein COQ4 homolog 2, mitochondrial (252 aa).

Residues H130, D131, H134, and E146 each coordinate Zn(2+).

This sequence belongs to the COQ4 family. In terms of assembly, component of a multi-subunit COQ enzyme complex. Zn(2+) is required as a cofactor.

It is found in the mitochondrion inner membrane. It catalyses the reaction a 4-hydroxy-3-methoxy-5-(all-trans-polyprenyl)benzoate + H(+) = a 2-methoxy-6-(all-trans-polyprenyl)phenol + CO2. Its pathway is cofactor biosynthesis; ubiquinone biosynthesis. Lyase that catalyzes the C1-decarboxylation of 4-hydroxy-3-methoxy-5-(all-trans-polyprenyl)benzoic acid into 2-methoxy-6-(all-trans-polyprenyl)phenol during ubiquinone biosynthesis. This chain is Ubiquinone biosynthesis protein COQ4 homolog 2, mitochondrial, found in Trypanosoma cruzi (strain CL Brener).